A 333-amino-acid polypeptide reads, in one-letter code: Flagellar P-ring protein (333 aa).

An N-terminal signal peptide occupies residues 1–22; that stretch reads MRRNILSMFLFITLIIYSSIFA.

This sequence belongs to the FlgI family. As to quaternary structure, the basal body constitutes a major portion of the flagellar organelle and consists of four rings (L,P,S, and M) mounted on a central rod.

Its subcellular location is the periplasm. It localises to the bacterial flagellum basal body. Assembles around the rod to form the L-ring and probably protects the motor/basal body from shearing forces during rotation. The protein is Flagellar P-ring protein of Fervidobacterium nodosum (strain ATCC 35602 / DSM 5306 / Rt17-B1).